The following is a 347-amino-acid chain: MSGEEEFYLFKNGSIGGPWDGPQYHIAPPWAFYLQTAFMGFVFMVGTPLNAIVLVVTIKYKKLRQPLNYILVNISFCGFLACIICIFTVFVSSSQGYFVFGKHVCAFEGFMGATAGLVTGWSLAFLAFERYIVICKPLGNFRFTAKHALVVVVATWVIGIGVAIPPFFGWSRYVPEGLQCSCGPDWYTVGTKYRSEYYTWFLFIFCFIVPLSLIIFSYSQLLSALRAVAAQQQESATTQKAEREVSRMVVVMVGSFCVCYVPYAALAMYMVNNREHGIDLRLVTIPAFFSKSSCVYNPIIYCFMNKQFRGCIMEMVCGKPMTDDSDMSSSAQRTEVSSVSSSQVSPS.

The Extracellular segment spans residues 1-37; that stretch reads MSGEEEFYLFKNGSIGGPWDGPQYHIAPPWAFYLQTA. N-linked (GlcNAc...) asparagine glycosylation is present at Asn-12. The chain crosses the membrane as a helical span at residues 38 to 58; the sequence is FMGFVFMVGTPLNAIVLVVTI. Residues 59–69 lie on the Cytoplasmic side of the membrane; it reads KYKKLRQPLNY. Residues 70–90 form a helical membrane-spanning segment; sequence ILVNISFCGFLACIICIFTVF. Over 91–106 the chain is Extracellular; that stretch reads VSSSQGYFVFGKHVCA. Cys-105 and Cys-182 are disulfide-bonded. A helical transmembrane segment spans residues 107-127; that stretch reads FEGFMGATAGLVTGWSLAFLA. Residues 128 to 147 are Cytoplasmic-facing; sequence FERYIVICKPLGNFRFTAKH. The helical transmembrane segment at 148–168 threads the bilayer; it reads ALVVVVATWVIGIGVAIPPFF. The Extracellular segment spans residues 169–197; that stretch reads GWSRYVPEGLQCSCGPDWYTVGTKYRSEY. A helical membrane pass occupies residues 198 to 218; the sequence is YTWFLFIFCFIVPLSLIIFSY. Topologically, residues 219-247 are cytoplasmic; it reads SQLLSALRAVAAQQQESATTQKAEREVSR. Residues 248–268 form a helical membrane-spanning segment; the sequence is MVVVMVGSFCVCYVPYAALAM. The Extracellular segment spans residues 269-282; the sequence is YMVNNREHGIDLRL. A helical membrane pass occupies residues 283-303; it reads VTIPAFFSKSSCVYNPIIYCF. N6-(retinylidene)lysine is present on Lys-291. Residues 304–347 lie on the Cytoplasmic side of the membrane; that stretch reads MNKQFRGCIMEMVCGKPMTDDSDMSSSAQRTEVSSVSSSQVSPS. Cys-317 carries the S-palmitoyl cysteine lipid modification. The tract at residues 324-347 is disordered; that stretch reads DSDMSSSAQRTEVSSVSSSQVSPS. Low complexity predominate over residues 328–347; sequence SSSAQRTEVSSVSSSQVSPS.

Belongs to the G-protein coupled receptor 1 family. Opsin subfamily. Phosphorylated on some or all of the serine and threonine residues present in the C-terminal region. As to expression, cone photoreceptor cells.

The protein resides in the membrane. In terms of biological role, visual pigments are the light-absorbing molecules that mediate vision. They consist of an apoprotein, opsin, covalently linked to cis-retinal. The protein is Ultraviolet-sensitive opsin of Melopsittacus undulatus (Budgerigar).